The chain runs to 337 residues: Inositol 2-dehydrogenase 1 (337 aa).

This sequence belongs to the Gfo/Idh/MocA family. Homotetramer.

It catalyses the reaction myo-inositol + NAD(+) = scyllo-inosose + NADH + H(+). In terms of biological role, involved in the oxidation of myo-inositol (MI) to 2-keto-myo-inositol (2KMI or 2-inosose). The sequence is that of Inositol 2-dehydrogenase 1 from Paenarthrobacter aurescens (strain TC1).